A 79-amino-acid polypeptide reads, in one-letter code: Small ribosomal subunit protein bS16 (79 aa).

Belongs to the bacterial ribosomal protein bS16 family.

This chain is Small ribosomal subunit protein bS16, found in Solidesulfovibrio magneticus (strain ATCC 700980 / DSM 13731 / RS-1) (Desulfovibrio magneticus).